The following is a 225-amino-acid chain: GrpE protein homolog 2, mitochondrial (225 aa).

The N-terminal 32 residues, Met-1–Phe-32, are a transit peptide targeting the mitochondrion. An N6-acetyllysine modification is found at Lys-142.

The protein belongs to the GrpE family. In terms of assembly, probable component of the PAM complex at least composed of a mitochondrial HSP70 protein, GRPEL1 or GRPEL2, TIMM44, TIMM16/PAM16 and TIMM14/DNAJC19.

The protein resides in the mitochondrion matrix. In terms of biological role, essential component of the PAM complex, a complex required for the translocation of transit peptide-containing proteins from the inner membrane into the mitochondrial matrix in an ATP-dependent manner. Seems to control the nucleotide-dependent binding of mitochondrial HSP70 to substrate proteins. Stimulates ATPase activity of mt-HSP70. May also serve to modulate the interconversion of oligomeric (inactive) and monomeric (active) forms of mt-HSP70. This Homo sapiens (Human) protein is GrpE protein homolog 2, mitochondrial (GRPEL2).